The primary structure comprises 593 residues: Thiol:disulfide interchange protein DsbD (593 aa).

Residues 1-21 form the signal peptide; it reads MRALLTFFVAGLLVLSSPAMA. 2 cysteine pairs are disulfide-bonded: Cys130/Cys136 and Cys207/Cys328. 8 helical membrane passes run 193–215, 235–257, 269–291, 318–340, 347–369, 384–401, 408–425, and 440–462; these read LLFL…YPIL, LVYV…SAGL, LIGL…TLQL, GAIS…LLYV, LTGG…LVAV, RVKT…IFLL, MWST…FGWL, and SAVG…NYWF. Positions 451–593 constitute a Thioredoxin domain; that stretch reads FASAQPALNY…FLEHIQRISN (143 aa). A disulfide bond links Cys508 and Cys511.

Belongs to the thioredoxin family. DsbD subfamily.

The protein localises to the cell inner membrane. It carries out the reaction [protein]-dithiol + NAD(+) = [protein]-disulfide + NADH + H(+). It catalyses the reaction [protein]-dithiol + NADP(+) = [protein]-disulfide + NADPH + H(+). Its function is as follows. Required to facilitate the formation of correct disulfide bonds in some periplasmic proteins and for the assembly of the periplasmic c-type cytochromes. Acts by transferring electrons from cytoplasmic thioredoxin to the periplasm. This transfer involves a cascade of disulfide bond formation and reduction steps. The chain is Thiol:disulfide interchange protein DsbD from Vibrio vulnificus (strain CMCP6).